The following is a 218-amino-acid chain: 23 kDa integral membrane protein (218 aa).

The Cytoplasmic portion of the chain corresponds to 1–12; it reads MATLGTGMRCLK. The helical transmembrane segment at 13 to 36 threads the bilayer; the sequence is SCVFVLNIICLLCSLVLIGAGAYV. The Extracellular portion of the chain corresponds to 37–55; that stretch reads EVKFSQYGDNLHKVWQAAP. The helical transmembrane segment at 56–71 threads the bilayer; sequence IAIIVVGVIILIVSFL. Over 72-82 the chain is Cytoplasmic; it reads GCCGAIKENVC. Residues 83–108 traverse the membrane as a helical segment; it reads MLYMYAFFLVVLLIAELAAAIVAVVY. Over 109–183 the chain is Extracellular; that stretch reads KDRIDSEIDA…SVFGAFLKRN (75 aa). N165 carries an N-linked (GlcNAc...) asparagine glycan. Residues 184-205 form a helical membrane-spanning segment; that stretch reads LVIVACVAFGVCFFQLLSIVIA. Topologically, residues 206 to 218 are cytoplasmic; sequence CCLGRQIKEYENV.

It belongs to the tetraspanin (TM4SF) family.

It localises to the membrane. The sequence is that of 23 kDa integral membrane protein from Schistosoma mansoni (Blood fluke).